An 805-amino-acid chain; its full sequence is ATP-dependent RNA helicase mak-5 (805 aa).

Residues Met-1–Thr-10 are compositionally biased toward basic residues. Disordered regions lie at residues Met-1 to Val-33 and Val-79 to Thr-189. The span at Glu-85–Glu-100 shows a compositional bias: acidic residues. Basic and acidic residues-rich tracts occupy residues Gln-110–Ala-119, Ala-126–Lys-143, and Lys-164–Thr-189. Positions Ser-209–Ser-237 match the Q motif motif. One can recognise a Helicase ATP-binding domain in the interval Ile-240–Ser-463. Ala-253–Thr-260 contacts ATP. A DEAD box motif is present at residues Asp-372–Asp-375. Over residues Phe-390 to Lys-406 the composition is skewed to basic and acidic residues. The interval Phe-390–Lys-435 is disordered. A compositionally biased stretch (acidic residues) spans Thr-410–Glu-431. In terms of domain architecture, Helicase C-terminal spans Tyr-510–Val-666. The interval Ala-729–Lys-751 is disordered.

It belongs to the DEAD box helicase family. DDX24/MAK5 subfamily.

Its subcellular location is the nucleus. The protein localises to the nucleolus. It catalyses the reaction ATP + H2O = ADP + phosphate + H(+). In terms of biological role, ATP-binding RNA helicase involved in the biogenesis of 60S ribosomal subunits and is required for the normal formation of 25S and 5.8S rRNAs. This is ATP-dependent RNA helicase mak-5 (mak-5) from Neurospora crassa (strain ATCC 24698 / 74-OR23-1A / CBS 708.71 / DSM 1257 / FGSC 987).